A 261-amino-acid chain; its full sequence is Phosphatidylglycerol--prolipoprotein diacylglyceryl transferase (261 aa).

Helical transmembrane passes span Phe-17 to Gly-37, Leu-59 to Tyr-79, Ile-94 to Trp-114, and Thr-121 to Gly-141. Residue Arg-142 participates in a 1,2-diacyl-sn-glycero-3-phospho-(1'-sn-glycerol) binding. A run of 2 helical transmembrane segments spans residues Pro-174–Tyr-194 and Phe-228–Ile-248.

It belongs to the Lgt family.

It is found in the cell inner membrane. The enzyme catalyses L-cysteinyl-[prolipoprotein] + a 1,2-diacyl-sn-glycero-3-phospho-(1'-sn-glycerol) = an S-1,2-diacyl-sn-glyceryl-L-cysteinyl-[prolipoprotein] + sn-glycerol 1-phosphate + H(+). It participates in protein modification; lipoprotein biosynthesis (diacylglyceryl transfer). Functionally, catalyzes the transfer of the diacylglyceryl group from phosphatidylglycerol to the sulfhydryl group of the N-terminal cysteine of a prolipoprotein, the first step in the formation of mature lipoproteins. This Polynucleobacter asymbioticus (strain DSM 18221 / CIP 109841 / QLW-P1DMWA-1) (Polynucleobacter necessarius subsp. asymbioticus) protein is Phosphatidylglycerol--prolipoprotein diacylglyceryl transferase.